The sequence spans 701 residues: Elongation factor G (701 aa).

The tr-type G domain maps to 8–286 (ERIRNIGIIA…AVVYYLPSPV (279 aa)). Residues 17-24 (AHIDAGKT), 85-89 (DTPGH), and 139-142 (NKMD) each bind GTP.

It belongs to the TRAFAC class translation factor GTPase superfamily. Classic translation factor GTPase family. EF-G/EF-2 subfamily.

It localises to the cytoplasm. Functionally, catalyzes the GTP-dependent ribosomal translocation step during translation elongation. During this step, the ribosome changes from the pre-translocational (PRE) to the post-translocational (POST) state as the newly formed A-site-bound peptidyl-tRNA and P-site-bound deacylated tRNA move to the P and E sites, respectively. Catalyzes the coordinated movement of the two tRNA molecules, the mRNA and conformational changes in the ribosome. This Roseiflexus castenholzii (strain DSM 13941 / HLO8) protein is Elongation factor G.